The sequence spans 360 residues: MLVYLAEYLTQFYTGFNVFSYVTFRAILALLTALMFSLWWGPKLIERLQVLQIGQVVRNDGPESHFSKRGTPTMGGLLILAGIFIGVLLWGDLGSRYVWVMLFVLGSFGLIGFIDDYRKVVRKDPKGLIARWKYIFQSLAALVVAFYLFYSTKHPGETQLVVPFFKDILPQLGLMFIVLTYFTIVGASNAVNLTDGLDGLAIMPTVMVAAAFALIAYLSGHVQFANYLHIPYLPGSGELVIVCTAIVGAGLGFLWFNTYPAQVFMGDVGSLSLGAALGTIAVLVRQEILLVIMGGVFVMETLSVILQVGSYKLRGQRIFRMAPIHHHYELKGWPEPRVIVRFWIISLFLVLLGLATLKLR.

Helical transmembrane passes span 26 to 46, 74 to 94, 97 to 117, 132 to 152, 168 to 188, 199 to 219, 236 to 256, 263 to 283, 288 to 308, and 338 to 358; these read AILA…KLIE, MGGL…GDLG, YVWV…IDDY, WKYI…FYST, ILPQ…VGAS, GLAI…AYLS, SGEL…FLWF, VFMG…IAVL, ILLV…ILQV, and VIVR…ATLK.

This sequence belongs to the glycosyltransferase 4 family. MraY subfamily. Mg(2+) serves as cofactor.

Its subcellular location is the cell inner membrane. The enzyme catalyses UDP-N-acetyl-alpha-D-muramoyl-L-alanyl-gamma-D-glutamyl-meso-2,6-diaminopimeloyl-D-alanyl-D-alanine + di-trans,octa-cis-undecaprenyl phosphate = di-trans,octa-cis-undecaprenyl diphospho-N-acetyl-alpha-D-muramoyl-L-alanyl-D-glutamyl-meso-2,6-diaminopimeloyl-D-alanyl-D-alanine + UMP. It functions in the pathway cell wall biogenesis; peptidoglycan biosynthesis. Catalyzes the initial step of the lipid cycle reactions in the biosynthesis of the cell wall peptidoglycan: transfers peptidoglycan precursor phospho-MurNAc-pentapeptide from UDP-MurNAc-pentapeptide onto the lipid carrier undecaprenyl phosphate, yielding undecaprenyl-pyrophosphoryl-MurNAc-pentapeptide, known as lipid I. The protein is Phospho-N-acetylmuramoyl-pentapeptide-transferase of Shewanella amazonensis (strain ATCC BAA-1098 / SB2B).